We begin with the raw amino-acid sequence, 137 residues long: Putative pre-16S rRNA nuclease (137 aa).

This sequence belongs to the YqgF nuclease family.

The protein resides in the cytoplasm. Its function is as follows. Could be a nuclease involved in processing of the 5'-end of pre-16S rRNA. This is Putative pre-16S rRNA nuclease from Clostridium botulinum (strain Eklund 17B / Type B).